The chain runs to 201 residues: Putative 3-methyladenine DNA glycosylase (201 aa).

It belongs to the DNA glycosylase MPG family.

This Rhodopseudomonas palustris (strain HaA2) protein is Putative 3-methyladenine DNA glycosylase.